A 570-amino-acid polypeptide reads, in one-letter code: Hydroxylamine reductase (570 aa).

[4Fe-4S] cluster contacts are provided by C5, C8, C17, and C23. Residues H266, E290, C334, C425, C453, C478, E513, and K515 each contribute to the hybrid [4Fe-2O-2S] cluster site. C425 is subject to Cysteine persulfide.

The protein belongs to the HCP family. The cofactor is [4Fe-4S] cluster. Requires hybrid [4Fe-2O-2S] cluster as cofactor.

It localises to the cytoplasm. It carries out the reaction A + NH4(+) + H2O = hydroxylamine + AH2 + H(+). Catalyzes the reduction of hydroxylamine to form NH(3) and H(2)O. This chain is Hydroxylamine reductase, found in Clostridium botulinum (strain ATCC 19397 / Type A).